A 588-amino-acid polypeptide reads, in one-letter code: Phosphomethylpyrimidine synthase (588 aa).

Residues N212, M241, Y270, H306, 326-328 (SRG), 367-370 (DGLR), and E406 each bind substrate. H410 contacts Zn(2+). A substrate-binding site is contributed by Y433. Residue H474 participates in Zn(2+) binding. [4Fe-4S] cluster contacts are provided by C554, C557, and C562.

The protein belongs to the ThiC family. As to quaternary structure, homodimer. The cofactor is [4Fe-4S] cluster.

It catalyses the reaction 5-amino-1-(5-phospho-beta-D-ribosyl)imidazole + S-adenosyl-L-methionine = 4-amino-2-methyl-5-(phosphooxymethyl)pyrimidine + CO + 5'-deoxyadenosine + formate + L-methionine + 3 H(+). It participates in cofactor biosynthesis; thiamine diphosphate biosynthesis. In terms of biological role, catalyzes the synthesis of the hydroxymethylpyrimidine phosphate (HMP-P) moiety of thiamine from aminoimidazole ribotide (AIR) in a radical S-adenosyl-L-methionine (SAM)-dependent reaction. This chain is Phosphomethylpyrimidine synthase, found in Bartonella quintana (strain Toulouse) (Rochalimaea quintana).